The sequence spans 108 residues: T cell receptor alpha variable 1-1 (108 aa).

An N-terminal signal peptide occupies residues 1–18 (MWGAFLLYVSMKMGGTAG). In terms of domain architecture, Ig-like spans 19 to 108 (QSLEQPSEVT…DSASYFCAVR (90 aa)). A glycan (N-linked (GlcNAc...) asparagine) is linked at Asn-38. A disulfide bridge connects residues Cys-39 and Cys-105.

Alpha-beta TR is a heterodimer composed of an alpha and beta chain; disulfide-linked. The alpha-beta TR is associated with the transmembrane signaling CD3 coreceptor proteins to form the TR-CD3 (TcR or TCR). The assembly of alpha-beta TR heterodimers with CD3 occurs in the endoplasmic reticulum where a single alpha-beta TR heterodimer associates with one CD3D-CD3E heterodimer, one CD3G-CD3E heterodimer and one CD247 homodimer forming a stable octameric structure. CD3D-CD3E and CD3G-CD3E heterodimers preferentially associate with TR alpha and TR beta chains, respectively. The association of the CD247 homodimer is the last step of TcR assembly in the endoplasmic reticulum and is required for transport to the cell surface.

The protein localises to the cell membrane. V region of the variable domain of T cell receptor (TR) alpha chain that participates in the antigen recognition. Alpha-beta T cell receptors are antigen specific receptors which are essential to the immune response and are present on the cell surface of T lymphocytes. Recognize peptide-major histocompatibility (MH) (pMH) complexes that are displayed by antigen presenting cells (APC), a prerequisite for efficient T cell adaptive immunity against pathogens. Binding of alpha-beta TR to pMH complex initiates TR-CD3 clustering on the cell surface and intracellular activation of LCK that phosphorylates the ITAM motifs of CD3G, CD3D, CD3E and CD247 enabling the recruitment of ZAP70. In turn ZAP70 phosphorylates LAT, which recruits numerous signaling molecules to form the LAT signalosome. The LAT signalosome propagates signal branching to three major signaling pathways, the calcium, the mitogen-activated protein kinase (MAPK) kinase and the nuclear factor NF-kappa-B (NF-kB) pathways, leading to the mobilization of transcription factors that are critical for gene expression and essential for T cell growth and differentiation. The T cell repertoire is generated in the thymus, by V-(D)-J rearrangement. This repertoire is then shaped by intrathymic selection events to generate a peripheral T cell pool of self-MH restricted, non-autoaggressive T cells. Post-thymic interaction of alpha-beta TR with the pMH complexes shapes TR structural and functional avidity. The chain is T cell receptor alpha variable 1-1 from Homo sapiens (Human).